A 384-amino-acid chain; its full sequence is S-adenosylmethionine synthase (384 aa).

H15 is a binding site for ATP. Position 17 (D17) interacts with Mg(2+). E43 contacts K(+). L-methionine is bound by residues E56 and Q99. The flexible loop stretch occupies residues 99 to 109; sequence QSADINQGVDR. ATP contacts are provided by residues 164 to 166, 230 to 231, D239, 245 to 246, A262, and K266; these read DAK, RF, and RK. Residue D239 participates in L-methionine binding. Residue K270 coordinates L-methionine.

The protein belongs to the AdoMet synthase family. In terms of assembly, homotetramer; dimer of dimers. Requires Mg(2+) as cofactor. The cofactor is K(+).

The protein resides in the cytoplasm. It catalyses the reaction L-methionine + ATP + H2O = S-adenosyl-L-methionine + phosphate + diphosphate. Its pathway is amino-acid biosynthesis; S-adenosyl-L-methionine biosynthesis; S-adenosyl-L-methionine from L-methionine: step 1/1. Functionally, catalyzes the formation of S-adenosylmethionine (AdoMet) from methionine and ATP. The overall synthetic reaction is composed of two sequential steps, AdoMet formation and the subsequent tripolyphosphate hydrolysis which occurs prior to release of AdoMet from the enzyme. The protein is S-adenosylmethionine synthase of Haemophilus influenzae (strain ATCC 51907 / DSM 11121 / KW20 / Rd).